Reading from the N-terminus, the 201-residue chain is Potassium-transporting ATPase KdpC subunit (201 aa).

A helical transmembrane segment spans residues 7-29 (PALVLLTALTAITGLAYPLAMTG).

This sequence belongs to the KdpC family. As to quaternary structure, the system is composed of three essential subunits: KdpA, KdpB and KdpC.

It localises to the cell inner membrane. Its function is as follows. Part of the high-affinity ATP-driven potassium transport (or Kdp) system, which catalyzes the hydrolysis of ATP coupled with the electrogenic transport of potassium into the cytoplasm. This subunit acts as a catalytic chaperone that increases the ATP-binding affinity of the ATP-hydrolyzing subunit KdpB by the formation of a transient KdpB/KdpC/ATP ternary complex. The protein is Potassium-transporting ATPase KdpC subunit of Methylorubrum populi (strain ATCC BAA-705 / NCIMB 13946 / BJ001) (Methylobacterium populi).